The chain runs to 296 residues: Ribosomal protein L11 methyltransferase (296 aa).

S-adenosyl-L-methionine contacts are provided by threonine 145, glycine 166, aspartate 188, and asparagine 230.

The protein belongs to the methyltransferase superfamily. PrmA family.

Its subcellular location is the cytoplasm. It carries out the reaction L-lysyl-[protein] + 3 S-adenosyl-L-methionine = N(6),N(6),N(6)-trimethyl-L-lysyl-[protein] + 3 S-adenosyl-L-homocysteine + 3 H(+). Methylates ribosomal protein L11. The chain is Ribosomal protein L11 methyltransferase from Histophilus somni (strain 129Pt) (Haemophilus somnus).